The sequence spans 473 residues: Photosystem II CP43 reaction center protein (473 aa).

Positions M1–E14 are excised as a propeptide. Position 15 is an N-acetylthreonine (T15). At T15 the chain carries Phosphothreonine. 5 helical membrane-spanning segments follow: residues L69–A93, L134–N155, K178–T200, K255–S275, and W291–A312. Residue E367 participates in [CaMn4O5] cluster binding. Residues R447–P471 traverse the membrane as a helical segment.

The protein belongs to the PsbB/PsbC family. PsbC subfamily. In terms of assembly, PSII is composed of 1 copy each of membrane proteins PsbA, PsbB, PsbC, PsbD, PsbE, PsbF, PsbH, PsbI, PsbJ, PsbK, PsbL, PsbM, PsbT, PsbX, PsbY, PsbZ, Psb30/Ycf12, at least 3 peripheral proteins of the oxygen-evolving complex and a large number of cofactors. It forms dimeric complexes. Binds multiple chlorophylls and provides some of the ligands for the Ca-4Mn-5O cluster of the oxygen-evolving complex. It may also provide a ligand for a Cl- that is required for oxygen evolution. PSII binds additional chlorophylls, carotenoids and specific lipids. serves as cofactor.

Its subcellular location is the plastid. It localises to the chloroplast thylakoid membrane. Its function is as follows. One of the components of the core complex of photosystem II (PSII). It binds chlorophyll and helps catalyze the primary light-induced photochemical processes of PSII. PSII is a light-driven water:plastoquinone oxidoreductase, using light energy to abstract electrons from H(2)O, generating O(2) and a proton gradient subsequently used for ATP formation. This chain is Photosystem II CP43 reaction center protein, found in Gossypium hirsutum (Upland cotton).